Here is a 602-residue protein sequence, read N- to C-terminus: Aspartate--tRNA(Asp/Asn) ligase (602 aa).

E170 serves as a coordination point for L-aspartate. The aspartate stretch occupies residues 194-197 (QLFK). An L-aspartate-binding site is contributed by R216. Residues 216 to 218 (RDE) and Q225 each bind ATP. H448 is a binding site for L-aspartate. E482 serves as a coordination point for ATP. R489 contributes to the L-aspartate binding site. 534 to 537 (GWDR) lines the ATP pocket. The tract at residues 559 to 602 (GGVDPLTSAPAPITAQQRKESGVDAKPEPKGDAAAAKPQVSAEK) is disordered. Residues 575–589 (QRKESGVDAKPEPKG) show a composition bias toward basic and acidic residues.

The protein belongs to the class-II aminoacyl-tRNA synthetase family. Type 1 subfamily. In terms of assembly, homodimer.

It localises to the cytoplasm. It carries out the reaction tRNA(Asx) + L-aspartate + ATP = L-aspartyl-tRNA(Asx) + AMP + diphosphate. Aspartyl-tRNA synthetase with relaxed tRNA specificity since it is able to aspartylate not only its cognate tRNA(Asp) but also tRNA(Asn). Reaction proceeds in two steps: L-aspartate is first activated by ATP to form Asp-AMP and then transferred to the acceptor end of tRNA(Asp/Asn). This is Aspartate--tRNA(Asp/Asn) ligase from Rhodococcus opacus (strain B4).